We begin with the raw amino-acid sequence, 424 residues long: Histidine--tRNA ligase (424 aa).

It belongs to the class-II aminoacyl-tRNA synthetase family. In terms of assembly, homodimer.

It is found in the cytoplasm. The enzyme catalyses tRNA(His) + L-histidine + ATP = L-histidyl-tRNA(His) + AMP + diphosphate + H(+). The polypeptide is Histidine--tRNA ligase (Shigella flexneri).